A 596-amino-acid polypeptide reads, in one-letter code: MARLGLAVCAASFHLFLLLASTSSLRRAPTEADTANHARRTAYHFQPAKNWQNDPNGPMYHNGMYHLFYQYNPHSALWDIGNLSWGHSVSGDLLNWAALDTALDPTSPFDANGCWSGSATILPGALPAILYTGIDASKEQVQNVAFAKNPSDPLLREWEKPAYNPVIALPADVPGDKFRDPSTAWLGRDGLWRIAVSAEVDGVASTLVYRSKDFVRWERNAAPLHASRAAGMVECPDLFPVAERGEDGLDTSANGAGGVRHVLKLSVMDTLQDYYMVGTYDDAADAFSPAEPERGDDCRSWRRLDYGHVYASKSFFDVRKNRRVLWAWANESDSQADDVARGWSGVQTFPRKMWLAKDGKQLLQWPIEEIKTLRRKRAGLWQGTRLGAGAVQEIVGVASSQADVEVVFKIPSLEEAERVDDPNRLLDPQKLCGEKGAAVRGGVGPFGLLVMASGDLHEHTAVFFRVFRHHDKYKLLMCTDLTKSSTRAGVYKPAYGGFVDMDIDDHKTISLRTLIDHSVVESFGGGGRACITARVYPEHVATSSSHLYVFNNGSDAVKVAKLEAWDLATATVNVVVGDHHGLVAPALELEPTRTTQ.

An N-terminal signal peptide occupies residues 1 to 24; sequence MARLGLAVCAASFHLFLLLASTSS. Substrate contacts are provided by residues 51–54, Q70, and W78; that span reads WQND. The active site involves D54. N82 carries an N-linked (GlcNAc...) asparagine glycan. Residues 115-116, 179-180, and E234 contribute to the substrate site; these read WS and RD. N-linked (GlcNAc...) asparagine glycosylation occurs at N330. C432 and C478 are oxidised to a cystine. N-linked (GlcNAc...) asparagine glycosylation is present at N552.

Belongs to the glycosyl hydrolase 32 family. As to expression, expressed in roots, leaves and flowers. Weakly expressed in seeds.

It localises to the secreted. It is found in the extracellular space. The protein localises to the apoplast. Its subcellular location is the cell wall. It catalyses the reaction Hydrolysis of terminal non-reducing beta-D-fructofuranoside residues in beta-D-fructofuranosides.. Its function is as follows. May play a role in sucrose partitioning during seed development. This is Beta-fructofuranosidase, insoluble isoenzyme 7 (CIN7) from Oryza sativa subsp. japonica (Rice).